The primary structure comprises 185 residues: dCTP deaminase (185 aa).

DCTP is bound by residues 107-112 (KSTYAR), 131-133 (TLE), Q152, Y166, and Q176. The active-site Proton donor/acceptor is the E133.

This sequence belongs to the dCTP deaminase family. In terms of assembly, homotrimer.

It carries out the reaction dCTP + H2O + H(+) = dUTP + NH4(+). It functions in the pathway pyrimidine metabolism; dUMP biosynthesis; dUMP from dCTP (dUTP route): step 1/2. Its function is as follows. Catalyzes the deamination of dCTP to dUTP. The polypeptide is dCTP deaminase (Anaplasma phagocytophilum (strain HZ)).